Here is a 408-residue protein sequence, read N- to C-terminus: LL-diaminopimelate aminotransferase (408 aa).

Tyr-15 and Gly-42 together coordinate substrate. Residues Tyr-72, 108 to 109, Tyr-132, Asn-187, Tyr-218, and 246 to 248 each bind pyridoxal 5'-phosphate; these read SK and SFS. Residues Lys-109, Tyr-132, and Asn-187 each contribute to the substrate site. Lys-249 is subject to N6-(pyridoxal phosphate)lysine. 2 residues coordinate pyridoxal 5'-phosphate: Arg-257 and Asn-292. Positions 292 and 388 each coordinate substrate.

It belongs to the class-I pyridoxal-phosphate-dependent aminotransferase family. LL-diaminopimelate aminotransferase subfamily. Homodimer. It depends on pyridoxal 5'-phosphate as a cofactor.

It catalyses the reaction (2S,6S)-2,6-diaminopimelate + 2-oxoglutarate = (S)-2,3,4,5-tetrahydrodipicolinate + L-glutamate + H2O + H(+). It participates in amino-acid biosynthesis; L-lysine biosynthesis via DAP pathway; LL-2,6-diaminopimelate from (S)-tetrahydrodipicolinate (aminotransferase route): step 1/1. Functionally, involved in the synthesis of meso-diaminopimelate (m-DAP or DL-DAP), required for both lysine and peptidoglycan biosynthesis. Catalyzes the direct conversion of tetrahydrodipicolinate to LL-diaminopimelate. The sequence is that of LL-diaminopimelate aminotransferase from Prochlorococcus marinus (strain MIT 9301).